Here is a 334-residue protein sequence, read N- to C-terminus: Cathepsin R (334 aa).

Residues 1 to 17 form the signal peptide; it reads MAAVVFIAFLYLGVASG. A propeptide spans 18–114 (activation peptide); that stretch reads VPVLDSSLDA…SIMKREAGSI (97 aa). 2 disulfides stabilise this stretch: Cys136–Cys179 and Cys170–Cys212. The active site involves Cys139. Residue Asn269 is glycosylated (N-linked (GlcNAc...) asparagine). Cysteines 270 and 323 form a disulfide. Active-site residues include His277 and Asn301.

The protein belongs to the peptidase C1 family. As to expression, placenta.

It is found in the lysosome. The chain is Cathepsin R (Ctsr) from Mus musculus (Mouse).